Reading from the N-terminus, the 124-residue chain is Fluoride-specific ion channel FluC (124 aa).

4 helical membrane-spanning segments follow: residues 5–25, 36–56, 70–90, and 100–120; these read LVVFVGAGLGGALRHGVNLAA, TMIINIAGSLAMGLLTGWFAV, TGILGGFTTFSTFSLEAFLLM, and LYVLGSVAAGIAGVGASLAVI. Na(+)-binding residues include glycine 74 and threonine 77.

It belongs to the fluoride channel Fluc/FEX (TC 1.A.43) family.

Its subcellular location is the cell inner membrane. It catalyses the reaction fluoride(in) = fluoride(out). Na(+) is not transported, but it plays an essential structural role and its presence is essential for fluoride channel function. Its function is as follows. Fluoride-specific ion channel. Important for reducing fluoride concentration in the cell, thus reducing its toxicity. The chain is Fluoride-specific ion channel FluC from Methylobacterium nodulans (strain LMG 21967 / CNCM I-2342 / ORS 2060).